A 180-amino-acid chain; its full sequence is GTP cyclohydrolase 1 (180 aa).

Residues C71, H74, and C142 each coordinate Zn(2+).

The protein belongs to the GTP cyclohydrolase I family. As to quaternary structure, toroid-shaped homodecamer, composed of two pentamers of five dimers.

The catalysed reaction is GTP + H2O = 7,8-dihydroneopterin 3'-triphosphate + formate + H(+). It functions in the pathway cofactor biosynthesis; 7,8-dihydroneopterin triphosphate biosynthesis; 7,8-dihydroneopterin triphosphate from GTP: step 1/1. The protein is GTP cyclohydrolase 1 of Helicobacter pylori (strain HPAG1).